Reading from the N-terminus, the 164-residue chain is Protein-export protein SecB (164 aa).

It belongs to the SecB family. Homotetramer, a dimer of dimers. One homotetramer interacts with 1 SecA dimer.

It is found in the cytoplasm. Its function is as follows. One of the proteins required for the normal export of preproteins out of the cell cytoplasm. It is a molecular chaperone that binds to a subset of precursor proteins, maintaining them in a translocation-competent state. It also specifically binds to its receptor SecA. This chain is Protein-export protein SecB, found in Ruegeria sp. (strain TM1040) (Silicibacter sp.).